The primary structure comprises 490 residues: Bifunctional dihydrocamalexate synthase/camalexin synthase (490 aa).

Residues 1–21 (MSVFLCFLVLLPLILIFLNVL) traverse the membrane as a helical segment.

Belongs to the cytochrome P450 family.

The protein localises to the membrane. The catalysed reaction is 2-(L-cystein-S-yl)-2-(1H-indol-3-yl)-acetonitrile + 2 reduced [NADPH--hemoprotein reductase] + 2 O2 = camalexin + hydrogen cyanide + 2 oxidized [NADPH--hemoprotein reductase] + CO2 + 4 H2O + 2 H(+). It catalyses the reaction 2-(L-cystein-S-yl)-2-(1H-indol-3-yl)-acetonitrile + reduced [NADPH--hemoprotein reductase] + O2 = (R)-dihydrocamalexate + hydrogen cyanide + oxidized [NADPH--hemoprotein reductase] + 2 H2O + 2 H(+). The enzyme catalyses (R)-dihydrocamalexate + reduced [NADPH--hemoprotein reductase] + O2 = camalexin + oxidized [NADPH--hemoprotein reductase] + CO2 + 2 H2O. Multifunctional enzyme involved in the biosynthesis of the indole-derived phytoalexin camalexin. Catalyzes two reactions, the formation of dihydrocamalexate from indole-3-acetonitrile-cysteine conjugate and the oxidative decarboxylation of dihydrocamalexate which is the final step in camalexin biosynthesis. Required for the resistance to the fungal pathogens A.brassicicola, B.cinerea, B.elliptica, B.tulipae, L.maculans and Colletotrichum higginsianum. Seems not to be required for resistance to P.syringae, P.porri, and not involved in age-related resistance. This Arabidopsis thaliana (Mouse-ear cress) protein is Bifunctional dihydrocamalexate synthase/camalexin synthase (CYP71B15).